The sequence spans 398 residues: Acetate kinase 1 (398 aa).

Mg(2+) is bound at residue N10. K17 lines the ATP pocket. R89 is a substrate binding site. Residue D146 is the Proton donor/acceptor of the active site. Residues H206–G210, D281–R283, and G329–N333 contribute to the ATP site. E384 is a Mg(2+) binding site.

It belongs to the acetokinase family. As to quaternary structure, homodimer. Mg(2+) is required as a cofactor. Mn(2+) serves as cofactor.

It localises to the cytoplasm. It catalyses the reaction acetate + ATP = acetyl phosphate + ADP. It functions in the pathway metabolic intermediate biosynthesis; acetyl-CoA biosynthesis; acetyl-CoA from acetate: step 1/2. Functionally, catalyzes the formation of acetyl phosphate from acetate and ATP. Can also catalyze the reverse reaction. The protein is Acetate kinase 1 of Neisseria meningitidis serogroup A / serotype 4A (strain DSM 15465 / Z2491).